Consider the following 402-residue polypeptide: Serine/threonine transporter SstT (402 aa).

A run of 8 helical transmembrane segments spans residues 17 to 37 (IAIGVVIGAILGLLIPKITVI), 44 to 64 (FVGGLKAIAPLLVSALVANAL), 79 to 99 (IVLYLFGTFAAALTAVISHYI), 138 to 158 (ALSQANYIGVLVWAVVFGFAM), 179 to 199 (IVRWIINLAPFGILGLVFDTI), 212 to 232 (VLILVLVGTMTFVALVINPII), 295 to 315 (MAGAAVTINVLTLAAVTTLGI), and 336 to 356 (ASGIAGGSLLLVPVACSLFGI).

This sequence belongs to the dicarboxylate/amino acid:cation symporter (DAACS) (TC 2.A.23) family.

The protein localises to the cell membrane. The catalysed reaction is L-serine(in) + Na(+)(in) = L-serine(out) + Na(+)(out). The enzyme catalyses L-threonine(in) + Na(+)(in) = L-threonine(out) + Na(+)(out). Involved in the import of serine and threonine into the cell, with the concomitant import of sodium (symport system). In Streptococcus thermophilus (strain ATCC BAA-491 / LMD-9), this protein is Serine/threonine transporter SstT.